Here is a 384-residue protein sequence, read N- to C-terminus: Sphingosine kinase 1 (384 aa).

One can recognise a DAGKc domain in the interval 12 to 159 (PRPCRVLVLL…MNLLSLHTAS (148 aa)). Residues 22-24 (NPR) and 54-58 (TERRN) each bind ATP. Residue 79–82 (SGDG) coordinates substrate. Residue aspartate 81 is the Proton donor/acceptor of the active site. ATP-binding positions include glutamate 86 and 111–113 (GSG). Short sequence motifs (nuclear export signal) lie at residues 147 to 155 (LSPMNLLSL) and 161 to 169 (LRLFSVLSL). Residue aspartate 178 coordinates substrate. Positions 185 and 191 each coordinate ATP. Phosphothreonine is present on threonine 193. Position 225 is a phosphoserine (serine 225). 341-343 (DGE) serves as a coordination point for ATP.

Interacts with ACY1. Binds to calmodulin. Interacts with SPHKAP. Interacts with CIB1, the interaction occurs in a calcium-dependent manner. Interacts with TRAF2. Interacts with EEF1A1; the interaction enhances SPHK1 kinase activity. Requires Mg(2+) as cofactor. As to expression, widely expressed with highest levels in adult liver, kidney, heart and skeletal muscle. Expressed in brain cortex (at protein level).

The protein localises to the cytoplasm. It localises to the nucleus. It is found in the cell membrane. The protein resides in the endosome membrane. Its subcellular location is the membrane. The protein localises to the clathrin-coated pit. It localises to the synapse. It catalyses the reaction a sphingoid base + ATP = a sphingoid 1-phosphate + ADP + H(+). The enzyme catalyses L-seryl-[protein] + acetyl-CoA = O-acetyl-L-seryl-[protein] + CoA. It carries out the reaction sphinganine + ATP = sphinganine 1-phosphate + ADP + H(+). The catalysed reaction is sphing-4-enine + ATP = sphing-4-enine 1-phosphate + ADP + H(+). It catalyses the reaction 1-O-hexadecyl-2-amino-sn-glycerol + ATP = 1-O-hexadecyl-2-desoxy-2-amino-sn-glycero-3-phosphate + ADP + H(+). Acetyltransferase activity increases in presence of the kinase substrate, sphingosine. In Purkinje cells, kinase activity on sphingosine increases in presence of VEGFA. In neurons, kinase activity increases during the first 24h in presence of Amyloid-beta protein 42 to decrease after 96h. In terms of biological role, catalyzes the phosphorylation of sphingosine to form sphingosine 1-phosphate (SPP), a lipid mediator with both intra- and extracellular functions. Also acts on D-erythro-sphingosine and to a lesser extent sphinganine, but not other lipids, such as D,L-threo-dihydrosphingosine, N,N-dimethylsphingosine, diacylglycerol, ceramide, or phosphatidylinositol. In contrast to proapoptotic SPHK2, has a negative effect on intracellular ceramide levels, enhances cell growth and inhibits apoptosis. Involved in the regulation of inflammatory response and neuroinflammation. Via the product sphingosine 1-phosphate, stimulates TRAF2 E3 ubiquitin ligase activity, and promotes activation of NF-kappa-B in response to TNF signaling leading to IL17 secretion. In response to TNF and in parallel to NF-kappa-B activation, negatively regulates RANTES induction through p38 MAPK signaling pathway. Involved in endocytic membrane trafficking induced by sphingosine, recruited to dilate endosomes, also plays a role on later stages of endosomal maturation and membrane fusion independently of its kinase activity. In Purkinje cells, seems to be also involved in the regulation of autophagosome-lysosome fusion upon VEGFA. Functionally, has serine acetyltransferase activity on PTGS2/COX2 in an acetyl-CoA dependent manner. The acetyltransferase activity increases in presence of the kinase substrate, sphingosine. During neuroinflammation, through PTGS2 acetylation, promotes neuronal secretion of specialized preresolving mediators (SPMs), especially 15-R-lipoxin A4, which results in an increase of phagocytic microglia. The protein is Sphingosine kinase 1 of Homo sapiens (Human).